Here is a 149-residue protein sequence, read N- to C-terminus: Large ribosomal subunit protein uL13 (149 aa).

It belongs to the universal ribosomal protein uL13 family. Part of the 50S ribosomal subunit.

In terms of biological role, this protein is one of the early assembly proteins of the 50S ribosomal subunit, although it is not seen to bind rRNA by itself. It is important during the early stages of 50S assembly. The sequence is that of Large ribosomal subunit protein uL13 from Thermotoga maritima (strain ATCC 43589 / DSM 3109 / JCM 10099 / NBRC 100826 / MSB8).